An 87-amino-acid chain; its full sequence is Small ribosomal subunit protein uS17 (87 aa).

This sequence belongs to the universal ribosomal protein uS17 family. Part of the 30S ribosomal subunit.

Its function is as follows. One of the primary rRNA binding proteins, it binds specifically to the 5'-end of 16S ribosomal RNA. In Macrococcus caseolyticus (strain JCSC5402) (Macrococcoides caseolyticum), this protein is Small ribosomal subunit protein uS17.